We begin with the raw amino-acid sequence, 81 residues long: Cytochrome c oxidase subunit NDUFA4 (81 aa).

Residues 1 to 14 (MLRQIIGQAKKHPS) lie on the Mitochondrial matrix side of the membrane. Lys-10 carries the post-translational modification N6-acetyllysine. A helical membrane pass occupies residues 15–37 (LIPLFVFIGTGATGATLYLLRLA). Residues 38–81 (LFNPDVCWDRNNPEPWNKLGPNDQYKFYSVNVDYSKLKKERPDF) are Mitochondrial intermembrane-facing. Residue Ser-66 is modified to Phosphoserine.

The protein belongs to the complex IV NDUFA4 subunit family. In terms of assembly, component of the cytochrome c oxidase (complex IV, CIV), a multisubunit enzyme composed of 14 subunits. The complex is composed of a catalytic core of 3 subunits MT-CO1, MT-CO2 and MT-CO3, encoded in the mitochondrial DNA, and 11 supernumerary subunits COX4I1 (or COX4I2), COX5A, COX5B, COX6A1 (or COX6A2), COX6B1 (or COX6B2), COX6C, COX7A2 (or COX7A1), COX7B, COX7C, COX8A and NDUFA4, which are encoded in the nuclear genome. The complex exists as a monomer or a dimer and forms supercomplexes (SCs) in the inner mitochondrial membrane with NADH-ubiquinone oxidoreductase (complex I, CI) and ubiquinol-cytochrome c oxidoreductase (cytochrome b-c1 complex, complex III, CIII), resulting in different assemblies (supercomplex SCI(1)III(2)IV(1) and megacomplex MCI(2)III(2)IV(2)). Interacts with RAB5IF. Interacts with FLVCR2; this interaction occurs in the absence of heme and is disrupted upon heme binding.

The protein resides in the mitochondrion inner membrane. In terms of biological role, component of the cytochrome c oxidase, the last enzyme in the mitochondrial electron transport chain which drives oxidative phosphorylation. The respiratory chain contains 3 multisubunit complexes succinate dehydrogenase (complex II, CII), ubiquinol-cytochrome c oxidoreductase (cytochrome b-c1 complex, complex III, CIII) and cytochrome c oxidase (complex IV, CIV), that cooperate to transfer electrons derived from NADH and succinate to molecular oxygen, creating an electrochemical gradient over the inner membrane that drives transmembrane transport and the ATP synthase. Cytochrome c oxidase is the component of the respiratory chain that catalyzes the reduction of oxygen to water. Electrons originating from reduced cytochrome c in the intermembrane space (IMS) are transferred via the dinuclear copper A center (CU(A)) of subunit 2 and heme A of subunit 1 to the active site in subunit 1, a binuclear center (BNC) formed by heme A3 and copper B (CU(B)). The BNC reduces molecular oxygen to 2 water molecules unsing 4 electrons from cytochrome c in the IMS and 4 protons from the mitochondrial matrix. NDUFA4 is required for complex IV maintenance. The protein is Cytochrome c oxidase subunit NDUFA4 (NDUFA4) of Homo sapiens (Human).